The chain runs to 215 residues: Vesicle-trafficking protein SEC22b-B (215 aa).

Residues 1–190 (MVLLTMIARL…RSDAKYLNTR (190 aa)) lie on the Cytoplasmic side of the membrane. The region spanning 6 to 119 (MIARLADGLP…YSFIEFDTYI (114 aa)) is the Longin domain. One can recognise a v-SNARE coiled-coil homology domain in the interval 134 to 194 (NLSNINTELQ…KYLNTRSTYA (61 aa)). A helical transmembrane segment spans residues 191–213 (STYAKLAAGGVFFIMLIVYIRFW). Topologically, residues 214–215 (WL) are lumenal.

Belongs to the synaptobrevin family. Component of 2 distinct SNARE complexes.

Its subcellular location is the endoplasmic reticulum membrane. The protein resides in the endoplasmic reticulum-Golgi intermediate compartment membrane. It is found in the golgi apparatus. The protein localises to the cis-Golgi network membrane. It localises to the trans-Golgi network membrane. Its subcellular location is the melanosome. In terms of biological role, SNARE involved in targeting and fusion of ER-derived transport vesicles with the Golgi complex as well as Golgi-derived retrograde transport vesicles with the ER. This is Vesicle-trafficking protein SEC22b-B from Danio rerio (Zebrafish).